A 285-amino-acid chain; its full sequence is Cold sensitive U2 snRNA suppressor 2 (285 aa).

The region spanning 45 to 130 (TSIYISGLPT…KQIRVERAQF (86 aa)) is the RRM 1 domain. The span at 135-149 (GDNMHGKENDLKEFN) shows a compositional bias: basic and acidic residues. Residues 135 to 154 (GDNMHGKENDLKEFNGPEPP) form a disordered region. Ser-163 carries the phosphoserine modification. Residues 183–265 (RTVIFANVFN…QKLLAFISGD (83 aa)) form the RRM 2 domain. The disordered stretch occupies residues 265 to 285 (DENTSSTSDKNEDSEVEDDLI). Over residues 276–285 (EDSEVEDDLI) the composition is skewed to acidic residues.

The protein belongs to the HTATSF1 family. In terms of assembly, interacts with PRP11. Associates with the U2 snRNA.

In terms of biological role, U2 snRNP protein which helps to refold U2 into a structure favorable for its binding to SF3b and SF3a prior to spliceosome assembly. Mediates functional interactions between U2 RNA and PRP5. Enforces ATP dependence during formation of the prespliceosome by brokering an interaction between PRP5 and the U2 snRNP that depends on correct U2 RNA structure. This Saccharomyces cerevisiae (strain ATCC 204508 / S288c) (Baker's yeast) protein is Cold sensitive U2 snRNA suppressor 2 (CUS2).